The chain runs to 184 residues: Ribosome-recycling factor (184 aa).

This sequence belongs to the RRF family.

The protein localises to the cytoplasm. In terms of biological role, responsible for the release of ribosomes from messenger RNA at the termination of protein biosynthesis. May increase the efficiency of translation by recycling ribosomes from one round of translation to another. The protein is Ribosome-recycling factor of Borrelia garinii subsp. bavariensis (strain ATCC BAA-2496 / DSM 23469 / PBi) (Borreliella bavariensis).